Reading from the N-terminus, the 156-residue chain is Cyanate hydratase (156 aa).

Catalysis depends on residues R96, E99, and S122.

Belongs to the cyanase family. As to quaternary structure, homodecamer composed of five homodimers.

It carries out the reaction cyanate + hydrogencarbonate + 3 H(+) = NH4(+) + 2 CO2. Catalyzes the reaction of cyanate with bicarbonate to produce ammonia and carbon dioxide. The polypeptide is Cyanate hydratase (cynS) (Escherichia coli O157:H7).